Here is a 131-residue protein sequence, read N- to C-terminus: Small ribosomal subunit protein uS11 (131 aa).

Belongs to the universal ribosomal protein uS11 family. Part of the 30S ribosomal subunit. Interacts with proteins S7 and S18. Binds to IF-3.

Its function is as follows. Located on the platform of the 30S subunit, it bridges several disparate RNA helices of the 16S rRNA. Forms part of the Shine-Dalgarno cleft in the 70S ribosome. This is Small ribosomal subunit protein uS11 from Endomicrobium trichonymphae.